The primary structure comprises 102 residues: XFENERGVADPVGFFDPLGFTADGSVENFKKLAQTEIKHGRVAMLATMGYITQEITGKLPGYLSPSTGVKYDDDINGVLGLIKIVPAGLWGIMIFYAALSLA.

E36 and H39 together coordinate chlorophyll a. A helical transmembrane segment spans residues 78 to 98; that stretch reads VLGLIKIVPAGLWGIMIFYAA.

The protein belongs to the light-harvesting chlorophyll a/b-binding (LHC) protein family. The LHC complex consists of chlorophyll a-b binding proteins. Requires Binds at least 14 chlorophylls (8 Chl-a and 6 Chl-b) and carotenoids such as lutein and neoxanthin. as cofactor. In terms of processing, photoregulated by reversible phosphorylation of its threonine residues.

The protein resides in the plastid. The protein localises to the chloroplast thylakoid membrane. Functionally, the light-harvesting complex (LHC) functions as a light receptor, it captures and delivers excitation energy to photosystems with which it is closely associated. In Amphidinium carterae (Dinoflagellate), this protein is Caroteno-chlorophyll a-c-binding protein.